The chain runs to 329 residues: Endonuclease 8-like 2 (329 aa).

The active-site Schiff-base intermediate with DNA is the proline 2. The active-site Proton donor is the glutamate 3. Residue lysine 50 is the Proton donor; for beta-elimination activity of the active site. Residue lysine 50 is modified to N6-acetyllysine. Serine 68 bears the Phosphoserine mark. The segment at 68–116 is disordered; that stretch reads SLLSEPLREGEQKDKARHHQEASDPSSWSPGGDSAVPSGDDGLQCLGGD. A compositionally biased stretch (basic and acidic residues) spans 73-89; that stretch reads PLREGEQKDKARHHQEA. Residues 90–102 show a composition bias toward low complexity; the sequence is SDPSSWSPGGDSA. Lysine 149 is subject to N6-acetyllysine. Asparagine 227 lines the DNA pocket. The segment at 280–316 adopts an FPG-type zinc-finger fold; it reads QIYQKEQCPAGHQVVRESLGPPGGFQRLTWWCPQCQP. The active-site Proton donor; for delta-elimination activity is arginine 306.

The protein belongs to the FPG family. Binds EP300.

It is found in the nucleus. The enzyme catalyses 2'-deoxyribonucleotide-(2'-deoxyribose 5'-phosphate)-2'-deoxyribonucleotide-DNA = a 3'-end 2'-deoxyribonucleotide-(2,3-dehydro-2,3-deoxyribose 5'-phosphate)-DNA + a 5'-end 5'-phospho-2'-deoxyribonucleoside-DNA + H(+). Acetylation of Lys-50 leads to loss of DNA nicking activity. In terms of biological role, involved in base excision repair of DNA damaged by oxidation or by mutagenic agents. Has DNA glycosylase activity towards 5-hydroxyuracil and other oxidized derivatives of cytosine with a preference for mismatched double-stranded DNA (DNA bubbles). Has low or no DNA glycosylase activity towards thymine glycol, 2-hydroxyadenine, hypoxanthine and 8-oxoguanine. Has AP (apurinic/apyrimidinic) lyase activity and introduces nicks in the DNA strand. Cleaves the DNA backbone by beta-delta elimination to generate a single-strand break at the site of the removed base with both 3'- and 5'-phosphates. This Bos taurus (Bovine) protein is Endonuclease 8-like 2 (NEIL2).